Consider the following 853-residue polypeptide: DNA mismatch repair protein MutS (853 aa).

614–621 contacts ATP; it reads GPNMGGKS.

Belongs to the DNA mismatch repair MutS family.

This protein is involved in the repair of mismatches in DNA. It is possible that it carries out the mismatch recognition step. This protein has a weak ATPase activity. This Klebsiella pneumoniae subsp. pneumoniae (strain ATCC 700721 / MGH 78578) protein is DNA mismatch repair protein MutS.